The chain runs to 307 residues: Ribonuclease Z (307 aa).

Residues histidine 63, histidine 65, aspartate 67, histidine 68, histidine 141, aspartate 212, and histidine 270 each coordinate Zn(2+). The active-site Proton acceptor is the aspartate 67.

It belongs to the RNase Z family. Homodimer. It depends on Zn(2+) as a cofactor.

The catalysed reaction is Endonucleolytic cleavage of RNA, removing extra 3' nucleotides from tRNA precursor, generating 3' termini of tRNAs. A 3'-hydroxy group is left at the tRNA terminus and a 5'-phosphoryl group is left at the trailer molecule.. Its function is as follows. Zinc phosphodiesterase, which displays some tRNA 3'-processing endonuclease activity. Probably involved in tRNA maturation, by removing a 3'-trailer from precursor tRNA. This is Ribonuclease Z from Bacillus mycoides (strain KBAB4) (Bacillus weihenstephanensis).